A 404-amino-acid chain; its full sequence is Probable eukaryotic initiation factor 4A (404 aa).

Positions 1 to 28 are disordered; the sequence is MAQQGKVEPQDQDSFLDDQPGIRPIPSF. Residues 26-54 carry the Q motif motif; that stretch reads PSFDDMPLHQNLLRGIYSHGFEKPSSIQQ. The region spanning 57 to 231 is the Helicase ATP-binding domain; it reads IVPFTRGGDI…KKFMRDPTRI (175 aa). 70-77 contributes to the ATP binding site; it reads AQSGTGKT. Positions 179 to 182 match the DEAD box motif; the sequence is DEAD. A Helicase C-terminal domain is found at 242–402; sequence GIKQFFIAVE…ELPVDFAAYL (161 aa).

The protein belongs to the DEAD box helicase family. eIF4A subfamily. In terms of assembly, eIF4F is a multi-subunit complex, the composition of which varies with external and internal environmental conditions. It is composed of at least EIF4A, EIF4E and EIF4G.

It carries out the reaction ATP + H2O = ADP + phosphate + H(+). Its function is as follows. ATP-dependent RNA helicase which is a subunit of the eIF4F complex involved in cap recognition and is required for mRNA binding to ribosome. In the current model of translation initiation, eIF4A unwinds RNA secondary structures in the 5'-UTR of mRNAs which is necessary to allow efficient binding of the small ribosomal subunit, and subsequent scanning for the initiator codon. This is Probable eukaryotic initiation factor 4A from Trypanosoma brucei brucei (strain 927/4 GUTat10.1).